The sequence spans 248 residues: uncharacterized protein (248 aa).

Serine 141 provides a ligand contact to substrate. Tyrosine 154 functions as the Proton acceptor in the catalytic mechanism.

This sequence belongs to the short-chain dehydrogenases/reductases (SDR) family.

This is an uncharacterized protein from Methylorubrum extorquens (strain ATCC 14718 / DSM 1338 / JCM 2805 / NCIMB 9133 / AM1) (Methylobacterium extorquens).